The primary structure comprises 766 residues: Hypoxia-inducible factor 1-alpha (766 aa).

The tract at residues 1–26 is disordered; that stretch reads MDTGVVPEKKSRVSSDRRKEKSRDAA. A compositionally biased stretch (basic and acidic residues) spans 7–26; it reads PEKKSRVSSDRRKEKSRDAA. A bHLH domain is found at 17 to 70; that stretch reads RRKEKSRDAARCRRGKESEVFYELAQELPLPHSVTSNLDKASIMRLAISYLHMR. PAS domains are found at residues 82–159 and 230–300; these read EERE…TSKK and PHPS…FAKG. In terms of domain architecture, PAC spans 304 to 347; it reads TGQYRMLAKRGGFVWVETQATVIYNNKNSQPQCVVCVNYVLSGI. A disordered region spans residues 361-383; sequence DMRPVKKELEEEESSEPEVSPVL. Pro426 carries the post-translational modification 4-hydroxyproline. A disordered region spans residues 475 to 509; that stretch reads DQHLVPNTSVDTTEVSTGPDSSSTPGSHSFTEPDS. Residues 479–489 show a composition bias toward polar residues; it reads VPNTSVDTTEV. Positions 490–503 are enriched in low complexity; it reads STGPDSSSTPGSHS. Position 559 is a 4-hydroxyproline (Pro559). The Nuclear localization signal signature appears at 718–721; sequence LLGI. Asn743 is modified ((3S)-3-hydroxyasparagine).

As to quaternary structure, efficient DNA binding requires heterodimerization of an alpha and a beta/ARNT subunit. In normoxia, is hydroxylated on Pro-426 and Pro-559. The hydroxylated prolines promote interaction with VHL, initiating rapid ubiquitination and subsequent proteasomal degradation. Under hypoxia, proline hydroxylation is impaired and ubiquitination is attenuated, resulting in stabilization. Post-translationally, in normoxia, is hydroxylated on Asn-743, thus abrogating interaction with CREBBP and EP300 and preventing transcriptional activation. In terms of processing, the iron and 2-oxoglutarate dependent 3-hydroxylation of asparagine is (S) stereospecific within HIF CTAD domains.

The protein resides in the cytoplasm. The protein localises to the nucleus. It localises to the nucleus speckle. Its activity is regulated as follows. Induced by reactive oxygen species (ROS). Its function is as follows. Functions as a master transcriptional regulator of the adaptive response to hypoxia. Under hypoxic conditions, activates the transcription of over 40 genes, including erythropoietin, glucose transporters, glycolytic enzymes, vascular endothelial growth factor, HILPDA, and other genes whose protein products increase oxygen delivery or facilitate metabolic adaptation to hypoxia. Plays an essential role in embryonic vascularization, tumor angiogenesis and pathophysiology of ischemic disease. This is Hypoxia-inducible factor 1-alpha (hif1a) from Oncorhynchus mykiss (Rainbow trout).